The following is a 343-amino-acid chain: Cytoplasmic tRNA 2-thiolation protein 1 (343 aa).

This sequence belongs to the TtcA family. CTU1/NCS6/ATPBD3 subfamily.

The protein localises to the cytoplasm. It functions in the pathway tRNA modification; 5-methoxycarbonylmethyl-2-thiouridine-tRNA biosynthesis. Its function is as follows. Plays a central role in 2-thiolation of mcm(5)S(2)U at tRNA wobble positions of tRNA(Lys), tRNA(Glu) and tRNA(Gln). Directly binds tRNAs and probably acts by catalyzing adenylation of tRNAs, an intermediate required for 2-thiolation. It is unclear whether it acts as a sulfurtransferase that transfers sulfur from thiocarboxylated URM1 onto the uridine of tRNAs at wobble position. The polypeptide is Cytoplasmic tRNA 2-thiolation protein 1 (Drosophila melanogaster (Fruit fly)).